The sequence spans 468 residues: Plant UBX domain-containing protein 7 (468 aa).

Met-1 bears the N-acetylmethionine mark. The UBA-like domain occupies 7-48 (SGDQQRLVSSFLEIAVGQTAETARQFLQATSWKLEEAIQLFY). 2 disordered regions span residues 138–168 (KSPGIWEPDEGDSSASASASASASESASAPR) and 299–329 (HFASLSKKRPRGSFSLTPHSKPKEDVAKDEE). Residues 150–166 (SSASASASASASESASA) show a composition bias toward low complexity. The region spanning 328–347 (EEEEELQRALAASLEDNNMK) is the UIM domain. The 82-residue stretch at 385–466 (DRSLQCRVGI…GVANSMISAT (82 aa)) folds into the UBX domain.

As to quaternary structure, interacts with CDC48A via its UBX domain and with ubiquitin via its N-terminal UBA-like domain. As to expression, expressed broadly in sporophyte and gametophyte cells.

It is found in the nucleus. In terms of biological role, acts as a bridge between CDC48A and ubiquitin, suggesting a role in targeted protein degradation. This chain is Plant UBX domain-containing protein 7, found in Arabidopsis thaliana (Mouse-ear cress).